Reading from the N-terminus, the 236-residue chain is Orotidine 5'-phosphate decarboxylase (236 aa).

Substrate contacts are provided by residues Asp-17, Lys-39, 66-75 (DLKFHDIPNT), Thr-125, Arg-186, Gln-195, Gly-215, and Arg-216. Lys-68 serves as the catalytic Proton donor.

It belongs to the OMP decarboxylase family. Type 1 subfamily. Homodimer.

It carries out the reaction orotidine 5'-phosphate + H(+) = UMP + CO2. It participates in pyrimidine metabolism; UMP biosynthesis via de novo pathway; UMP from orotate: step 2/2. Its function is as follows. Catalyzes the decarboxylation of orotidine 5'-monophosphate (OMP) to uridine 5'-monophosphate (UMP). This is Orotidine 5'-phosphate decarboxylase from Buchnera aphidicola subsp. Schizaphis graminum (strain Sg).